The following is a 691-amino-acid chain: Inactive TPR repeat-containing thioredoxin TTL3 (691 aa).

2 disordered regions span residues 1 to 153 and 174 to 209; these read MSHS…AVSP and MASR…TSGK. The residue at position 8 (S8) is a Phosphoserine. Basic and acidic residues predominate over residues 19-39; that stretch reads RFRDLQRNDDDVNKPDFRELD. S42 and S45 each carry phosphoserine. Low complexity predominate over residues 51-79; it reads GSASSSAAATPTSSSGSSGSASGKPSVSS. Residues 83–93 show a composition bias toward basic and acidic residues; that stretch reads KRLDDAYKSHS. Polar residues-rich tracts occupy residues 94 to 108, 118 to 140, and 175 to 189; these read GELS…TTTR, SSTG…HTSP, and ASRT…CTGT. 8 TPR repeats span residues 220-253, 255-287, 289-321, 327-362, 412-445, 458-491, 492-525, and 527-559; these read PEEL…SPGN, AYRS…DPSY, RAHQ…PDQA, QTLE…GADS, AYVL…DQTN, VVRA…DDSN, SVLY…QPSY, and KALL…LPGD. In terms of domain architecture, Thioredoxin spans 596 to 683; that stretch reads DKFKKSVALP…MVCPSHQFLE (88 aa).

In terms of assembly, interacts with BRL2. As to expression, expressed in embryos and organ primordia in shoot and root. In primary and cauline leaves and petals, is expressed in hydathodes, guard cells, petiole cells and cells associated with differentiating vascular bundles.

Functionally, involved in osmotic and salt stress tolerance. May play a role in the control of meristematic cell size during osmotic stress. May function as an adapter protein for BRL2 and may be required for signaling affecting leaf vascular tissue pattern formation. This chain is Inactive TPR repeat-containing thioredoxin TTL3, found in Arabidopsis thaliana (Mouse-ear cress).